The primary structure comprises 167 residues: Ribosome rescue factor SmrB (167 aa).

The Smr domain occupies 91-166 (LDLHGLTREQ…GEAAILILVD (76 aa)).

This sequence belongs to the SmrB family. Associates with collided ribosomes, but not with correctly translating polysomes.

Acts as a ribosome collision sensor. Detects stalled/collided disomes (pairs of ribosomes where the leading ribosome is stalled and a second ribosome has collided with it) and endonucleolytically cleaves mRNA at the 5' boundary of the stalled ribosome. Stalled/collided disomes form a new interface (primarily via the 30S subunits) that binds SmrB. Cleaved mRNA becomes available for tmRNA ligation, leading to ribosomal subunit dissociation and rescue of stalled ribosomes. The chain is Ribosome rescue factor SmrB from Haemophilus influenzae (strain ATCC 51907 / DSM 11121 / KW20 / Rd).